The following is a 231-amino-acid chain: MLRLEDLDIRKGSFCLSGTASIGAADSVAVIGPSGAGKSTLLEAIAGFQPLHAGQVLWRGEDLTAHRPGQRPVAMLFQDGNLFPHLTVRQNAGLGIDPNRKLRPKERQTVEEAIARVGLGGLEERKPAELSGGQQSRAALARVLVQRRDILLLDEPFAALGPALKAEMLDLVKEITSENGVTLLMVSHDPDDARRIADQVILIAEGQLYPPAPTHALLDNPPPALRGYLGA.

In terms of domain architecture, ABC transporter spans 2 to 230 (LRLEDLDIRK…PPPALRGYLG (229 aa)). ATP is bound at residue 32–39 (GPSGAGKS).

Belongs to the ABC transporter superfamily. Thiamine importer (TC 3.A.1.19.1) family. In terms of assembly, the complex is composed of two ATP-binding proteins (ThiQ), two transmembrane proteins (ThiP) and a solute-binding protein (ThiB).

The protein localises to the cell inner membrane. It carries out the reaction thiamine(out) + ATP + H2O = thiamine(in) + ADP + phosphate + H(+). Functionally, part of the ABC transporter complex ThiBPQ involved in thiamine import. Responsible for energy coupling to the transport system. This Ruegeria sp. (strain TM1040) (Silicibacter sp.) protein is Thiamine import ATP-binding protein ThiQ.